We begin with the raw amino-acid sequence, 615 residues long: MALLQISEPGLSAAPHQRRLAAGIDLGTTHSLVAVVRSGQTETLADSENRHLLPSVVQYRKEDIQVGWQARQQAASDPVNTVSSVKRMMGRSLADIQKRYPNLPYQFQASENGLPLINTAAGLVDPIQVSSDILKSLAQRAEKTLDGKLDGVVITVPAYFDDAQRQGTKDAARLAGLHVLRLLNEPTAAAIAYGLDSGQEGVIAVYDLGGGTFDVSILRLSRGVFEVLATGGDTALGGDDFDLLLANWIREQAGISDNDHRLQRQLLDIATQTKIVLSEADSAEICFADWQGRITRNEFNELITSLVKRTLLSCRRALKDAGVTADEVLQVVMVGGSTRVPLVRNMVGEFFDREPLTSIDPDRVVAIGAAIQADILVGNKPDSEMLLLDVIPLSLGLETMGGLVEKVIPRNTTIPVARAQEFTTFKDGQSAMSIHVVQGERELVNDCRSLARFTLRGIPPLAAGGAHIRVTFQVDADGLLSVSALEKSTGIESSIQVKPSYGLSDEEIARMLKDSMTNAQEDIQVRKLAEQKVEAARVLESLTGALEKDADLLSQEEQVAIDAAVQALIESVQGTSPDAIESAIKQLDKQTQEFAARRMDTSIRRALAGHSVDEI.

This sequence belongs to the heat shock protein 70 family.

Its function is as follows. Chaperone involved in the maturation of iron-sulfur cluster-containing proteins. Has a low intrinsic ATPase activity which is markedly stimulated by HscB. Involved in the maturation of IscU. The protein is Chaperone protein HscA of Xenorhabdus nematophila (strain ATCC 19061 / DSM 3370 / CCUG 14189 / LMG 1036 / NCIMB 9965 / AN6).